The primary structure comprises 408 residues: Menaquinone reductase (408 aa).

Residues Gly13 to Ala17, Cys46 to Gly49, Arg103, Ala127, Asp290, and Gly302 to Ile303 contribute to the FAD site.

This sequence belongs to the geranylgeranyl reductase family. The cofactor is FAD.

The enzyme catalyses menaquinone-9 + AH2 = beta-dihydromenaquinone-9 + A. The protein operates within quinol/quinone metabolism; menaquinone biosynthesis. In terms of biological role, catalyzes the reduction of a single double bond in the isoprenoid tail of menaquinone (MK-9) in M.tuberculosis, likely the beta-isoprene unit, forming the predominant form of menaquinone found in mycobacteria, MK-9(II-H2). This Mycobacterium tuberculosis (strain CDC 1551 / Oshkosh) protein is Menaquinone reductase.